Reading from the N-terminus, the 180-residue chain is ATP-dependent protease subunit HslV (180 aa).

Thr10 is a catalytic residue. Na(+) is bound by residues Gly165, Cys168, and Thr171.

The protein belongs to the peptidase T1B family. HslV subfamily. In terms of assembly, a double ring-shaped homohexamer of HslV is capped on each side by a ring-shaped HslU homohexamer. The assembly of the HslU/HslV complex is dependent on binding of ATP.

The protein localises to the cytoplasm. The enzyme catalyses ATP-dependent cleavage of peptide bonds with broad specificity.. Its activity is regulated as follows. Allosterically activated by HslU binding. Its function is as follows. Protease subunit of a proteasome-like degradation complex believed to be a general protein degrading machinery. This chain is ATP-dependent protease subunit HslV, found in Koribacter versatilis (strain Ellin345).